The chain runs to 267 residues: 4-hydroxy-tetrahydrodipicolinate reductase (267 aa).

NAD(+) is bound by residues 8–13 (GAAGRM) and glutamate 34. Arginine 35 serves as a coordination point for NADP(+). NAD(+) is bound by residues 98–100 (GST) and 122–125 (APNM). Histidine 155 functions as the Proton donor/acceptor in the catalytic mechanism. Histidine 156 contributes to the (S)-2,3,4,5-tetrahydrodipicolinate binding site. Lysine 159 acts as the Proton donor in catalysis. 165–166 (GT) is a binding site for (S)-2,3,4,5-tetrahydrodipicolinate.

Belongs to the DapB family.

It is found in the cytoplasm. The enzyme catalyses (S)-2,3,4,5-tetrahydrodipicolinate + NAD(+) + H2O = (2S,4S)-4-hydroxy-2,3,4,5-tetrahydrodipicolinate + NADH + H(+). It carries out the reaction (S)-2,3,4,5-tetrahydrodipicolinate + NADP(+) + H2O = (2S,4S)-4-hydroxy-2,3,4,5-tetrahydrodipicolinate + NADPH + H(+). Its pathway is amino-acid biosynthesis; L-lysine biosynthesis via DAP pathway; (S)-tetrahydrodipicolinate from L-aspartate: step 4/4. Functionally, catalyzes the conversion of 4-hydroxy-tetrahydrodipicolinate (HTPA) to tetrahydrodipicolinate. The polypeptide is 4-hydroxy-tetrahydrodipicolinate reductase (Citrifermentans bemidjiense (strain ATCC BAA-1014 / DSM 16622 / JCM 12645 / Bem) (Geobacter bemidjiensis)).